The chain runs to 351 residues: Hydroxymethylglutaryl-CoA synthase (351 aa).

Glutamate 80 acts as the Proton donor/acceptor in catalysis. Cysteine 112 acts as the Acyl-thioester intermediate in catalysis. Positions 112 and 153 each coordinate (3S)-3-hydroxy-3-methylglutaryl-CoA. Arginine 199 contributes to the CoA binding site. Positions 201 and 234 each coordinate (3S)-3-hydroxy-3-methylglutaryl-CoA. Histidine 234 functions as the Proton donor/acceptor in the catalytic mechanism. Lysine 239 serves as a coordination point for CoA. Residues arginine 243, asparagine 266, and serine 296 each contribute to the (3S)-3-hydroxy-3-methylglutaryl-CoA site.

Belongs to the thiolase-like superfamily. Archaeal HMG-CoA synthase family. Interacts with acetoacetyl-CoA thiolase that catalyzes the precedent step in the pathway and with a DUF35 protein. The acetoacetyl-CoA thiolase/HMG-CoA synthase complex channels the intermediate via a fused CoA-binding site, which allows for efficient coupling of the endergonic thiolase reaction with the exergonic HMGCS reaction.

The enzyme catalyses acetoacetyl-CoA + acetyl-CoA + H2O = (3S)-3-hydroxy-3-methylglutaryl-CoA + CoA + H(+). The protein operates within metabolic intermediate biosynthesis; (R)-mevalonate biosynthesis; (R)-mevalonate from acetyl-CoA: step 2/3. Its function is as follows. Catalyzes the condensation of acetyl-CoA with acetoacetyl-CoA to form 3-hydroxy-3-methylglutaryl-CoA (HMG-CoA). Functions in the mevalonate (MVA) pathway leading to isopentenyl diphosphate (IPP), a key precursor for the biosynthesis of isoprenoid compounds that are building blocks of archaeal membrane lipids. The polypeptide is Hydroxymethylglutaryl-CoA synthase (Thermoplasma volcanium (strain ATCC 51530 / DSM 4299 / JCM 9571 / NBRC 15438 / GSS1)).